The primary structure comprises 288 residues: 33 kDa chaperonin (288 aa).

Intrachain disulfides connect Cys-225–Cys-227 and Cys-258–Cys-261.

This sequence belongs to the HSP33 family. In terms of processing, under oxidizing conditions two disulfide bonds are formed involving the reactive cysteines. Under reducing conditions zinc is bound to the reactive cysteines and the protein is inactive.

Its subcellular location is the cytoplasm. Its function is as follows. Redox regulated molecular chaperone. Protects both thermally unfolding and oxidatively damaged proteins from irreversible aggregation. Plays an important role in the bacterial defense system toward oxidative stress. In Shewanella denitrificans (strain OS217 / ATCC BAA-1090 / DSM 15013), this protein is 33 kDa chaperonin.